The following is a 798-amino-acid chain: MEASGKLICRQRQVLFSFLLLGLSLAGAAEPRSYSVVEETEGSSFVTNLAKDLGLEQREFSRRGVRVVSRGNKLHLQLNQETGDLLLNEKLDREDLCGHTEPCVLRFQVLLESPFEFFQAELQVIDINDHSPVFLDKQMLVKVSESSPPGTAFPLKNAEDLDVGQNNIENYIISPNSHFRVLTRKRSDGRKYPELVLDKALDREEEAELRLTLTALDGGSPPRSGTAQVYIEVLDVNDNAPEFEQPFYRVQISEDSPVGFLVVKVSATDVDTGVNGEISYSLFQASEEIGKTFKINPLTGEIELKKQLDFEKLQSYEVNIEARDAGTFSGKCTVLIQVIDVNDHAPEVTMSAFTSPIPENAPETVVALFSVSDLDSGENGKISCSIQEDLPFLLKSAENFYTLLTERPLDRESRAEYNITITVTDLGTPMLKTQLNMTVLIADVNDNAPAFTQTSYTLFVRENNSPALHIGSVSATDRDSGTNAQVTYSLLPPQDPHLPLTSLVSINADNGHLFALRSLDYEALQGFEFRVGASDHGSPALSSEALVRVLVLDANDNSPFVLYPLQNGSAPCTELVPRAAEPGYLVTKVVAVDGDSGQNAWLSYQLLKATEPGLFGVWAHNGEVRTARLLSERDAAKHRLAVLVKDNGEPPRSATATLHVLLVDGFSQPYLPLPEAAPTQAQADSLTVYLVVALASVSSLFLFSVLLFVAVRLCRRSRAASVGRCLVPEGPLPGHLVDMGGTGTLSQSYQYEVCLAGGSGTNEFKFLKPIIPNFPPQCPGKEIQGNSTFPNNFGFNIQ.

The N-terminal stretch at 1–28 (MEASGKLICRQRQVLFSFLLLGLSLAGA) is a signal peptide. Residues 29–690 (AEPRSYSVVE…AQADSLTVYL (662 aa)) are Extracellular-facing. 5 consecutive Cadherin domains span residues 36–134 (VVEE…SPVF), 139–243 (MLVK…APEF), 248–348 (YRVQ…APEV), 353–451 (FTSP…APAF), and 456–561 (YTLF…SPFV). N-linked (GlcNAc...) asparagine glycosylation is found at Asn-418 and Asn-436. N-linked (GlcNAc...) asparagine glycosylation occurs at Asn-567. A Cadherin 6 domain is found at 568–671 (GSAPCTELVP…LVDGFSQPYL (104 aa)). The helical transmembrane segment at 691 to 711 (VVALASVSSLFLFSVLLFVAV) threads the bilayer. Residues 712-798 (RLCRRSRAAS…FPNNFGFNIQ (87 aa)) are Cytoplasmic-facing.

It localises to the cell membrane. Functionally, potential calcium-dependent cell-adhesion protein. May be involved in the establishment and maintenance of specific neuronal connections in the brain. This Pan troglodytes (Chimpanzee) protein is Protocadherin beta-13 (PCDHB13).